Here is a 216-residue protein sequence, read N- to C-terminus: Cytidylate kinase (216 aa).

Glycine 9–threonine 17 contacts ATP.

The protein belongs to the cytidylate kinase family. Type 1 subfamily.

Its subcellular location is the cytoplasm. It catalyses the reaction CMP + ATP = CDP + ADP. The enzyme catalyses dCMP + ATP = dCDP + ADP. The polypeptide is Cytidylate kinase (Caulobacter sp. (strain K31)).